The primary structure comprises 752 residues: Double zinc ribbon and ankyrin repeat-containing protein 1 (752 aa).

2 consecutive DZANK-type zinc fingers follow at residues 210–270 (CPKC…VVCE) and 338–386 (CSKC…GGCG). The segment covering 448–469 (KKRSQQREAELSRQEQMRDRKP) has biased composition (basic and acidic residues). Disordered regions lie at residues 448-471 (KKRS…KPLL) and 536-614 (PPEE…VGPE). Positions 536–554 (PPEESRSSSAGQRSRSVTS) are enriched in low complexity. Polar residues predominate over residues 555–580 (ESQNLSSVTEGRNSASPENNINTTGS). Over residues 600 to 614 (PESKDSLLLKEVGPE) the composition is skewed to basic and acidic residues. ANK repeat units follow at residues 638–667 (DGRP…DVNQ), 672–703 (LKNT…SIRK), and 707–737 (RGQT…GLLL).

The protein resides in the cytoplasm. It localises to the cytoskeleton. The protein localises to the microtubule organizing center. Its subcellular location is the centrosome. It is found in the cilium basal body. Required for the intracellular transport of organelles and vesicles, and is essential for the photoreceptor's outer segments formation, maintenance and function. The protein is Double zinc ribbon and ankyrin repeat-containing protein 1 (dzank1) of Danio rerio (Zebrafish).